A 1088-amino-acid polypeptide reads, in one-letter code: Serine/threonine-protein kinase LATS2 (1088 aa).

Residues 24–49 (EGLKQPSKSSVQGLPAGPNSDTSLDA) form a disordered region. A Phosphoserine; by AURKA modification is found at Ser-83. Residues 98–139 (EVNRQMLQELVNAGCDQEMAGRALKQTGSRSIEAALEYISKM) enclose the UBA domain. Positions 101–141 (RQMLQELVNAGCDQEMAGRALKQTGSRSIEAALEYISKMGY) are interaction with ubiquitinated AMOTL2. Residues 271–280 (RSPSFQSKTP) show a composition bias toward polar residues. Residues 271–323 (RSPSFQSKTPPETGGYASLPTKGQGGPPGAGLAFPPPAAGLYVPHPHHKQAGP) are disordered. At Thr-279 the chain carries Phosphothreonine. At Ser-380 the chain carries Phosphoserine. 2 disordered regions span residues 383-428 (KPGL…SLPA) and 454-483 (PQTA…AAEG). The segment covering 404–413 (SRTNSFNSHQ) has biased composition (polar residues). Pro residues predominate over residues 466-478 (VPAPAPAPAPAPA). A PPxY motif motif is present at residues 515 to 518 (PPPY). The interval 543-592 (SLRAGPNEPEGGDKSRKSAKGDKGGKDKKQIQTSPVPVRKNSRDEEKRES) is disordered. The segment covering 553–572 (GGDKSRKSAKGDKGGKDKKQ) has biased composition (basic and acidic residues). Ser-576 bears the Phosphoserine mark. Residues 583 to 592 (NSRDEEKRES) show a composition bias toward basic and acidic residues. Positions 668–973 (FVKIKTLGIG…ADDLKAHPFF (306 aa)) constitute a Protein kinase domain. Residues 674–682 (LGIGAFGEV) and Lys-697 each bind ATP. The active-site Proton acceptor is Asp-791. The AGC-kinase C-terminal domain maps to 974 to 1052 (SAIDFSSDIR…RRFFDDNGYP (79 aa)). A disordered region spans residues 994 to 1022 (SHPMDTSNFDPVDEESPWNDASEGSTKAW). Residue Thr-1041 is modified to Phosphothreonine. Residues 1056 to 1088 (PKPSGAEASQAESSDLESSDLVDQTEGCQPVYV) form a disordered region.

Belongs to the protein kinase superfamily. AGC Ser/Thr protein kinase family. As to quaternary structure, interacts with and is phosphorylated by AURKA. Binds to AR. Interacts with AJUBA during mitosis and this complex regulates organization of the spindle apparatus through recruitment of gamma-tubulin to the centrosome. Interacts (via PPxY motif) with YAP1 (via WW domains). Interacts with MOB1A and MOB1B. Interacts with LIMD1, WTIP and AJUBA. Interacts with SNAI1. Interacts with WWC1, WWC2 and WWC3 (via their WW domains). Interacts (via UBA domain) with ubiquitinated AMOTL2; the interaction promotes LATS2 phosphorylation of YAP1. Requires Mg(2+) as cofactor. In terms of processing, autophosphorylated and phosphorylated during M-phase and the G1/S-phase of the cell cycle. Phosphorylated and activated by STK3/MST2. Phosphorylated by MAP4Ks; in parallel to STK3/MST2 and resulting to its activation. Phosphorylation by NUAK2 may regulate its activity in phosphorylation and inactivation YAP1. As to expression, expressed at high levels in heart and skeletal muscle and at lower levels in all other tissues examined.

Its subcellular location is the cytoplasm. The protein resides in the cytoskeleton. The protein localises to the microtubule organizing center. It localises to the centrosome. It is found in the spindle pole. Its subcellular location is the nucleus. The enzyme catalyses L-seryl-[protein] + ATP = O-phospho-L-seryl-[protein] + ADP + H(+). It carries out the reaction L-threonyl-[protein] + ATP = O-phospho-L-threonyl-[protein] + ADP + H(+). Its function is as follows. Negative regulator of YAP1 in the Hippo signaling pathway that plays a pivotal role in organ size control and tumor suppression by restricting proliferation and promoting apoptosis. The core of this pathway is composed of a kinase cascade wherein STK3/MST2 and STK4/MST1, in complex with its regulatory protein SAV1, phosphorylates and activates LATS1/2 in complex with its regulatory protein MOB1, which in turn phosphorylates and inactivates YAP1 oncoprotein and WWTR1/TAZ. Phosphorylation of YAP1 by LATS2 inhibits its translocation into the nucleus to regulate cellular genes important for cell proliferation, cell death, and cell migration. Also phosphorylates YAP1 in response to cell contact inhibition-driven WWP1 ubiquitination of AMOTL2, which results in LATS2 activation. Acts as a tumor suppressor which plays a critical role in centrosome duplication, maintenance of mitotic fidelity and genomic stability. Negatively regulates G1/S transition by down-regulating cyclin E/CDK2 kinase activity. Negative regulator of the androgen receptor. Phosphorylates SNAI1 in the nucleus leading to its nuclear retention and stabilization, which enhances its epithelial-mesenchymal transition and tumor cell invasion/migration activities. This tumor-promoting activity is independent of its effects upon YAP1 or WWTR1/TAZ. Acts as an activator of the NLRP3 inflammasome by mediating phosphorylation of 'Ser-265' of NLRP3 following NLRP3 palmitoylation, promoting NLRP3 activation by NEK7. This chain is Serine/threonine-protein kinase LATS2, found in Homo sapiens (Human).